The following is a 90-amino-acid chain: U7-theraphotoxin-Hhn1a 6 (90 aa).

The signal sequence occupies residues 1–19 (MKTAIFTVVLALAVFAVLS). The propeptide occupies 20 to 50 (FGWEANEKALSEEFTELIHEKEAASEAEARE). Intrachain disulfides connect cysteine 51/cysteine 65, cysteine 58/cysteine 70, and cysteine 64/cysteine 81.

It belongs to the neurotoxin 10 (Hwtx-1) family. 13 (Hntx-13) subfamily. As to expression, expressed by the venom gland.

The protein resides in the secreted. Ion channel inhibitor. In Cyriopagopus hainanus (Chinese bird spider), this protein is U7-theraphotoxin-Hhn1a 6.